Reading from the N-terminus, the 468-residue chain is Shaggy-related protein kinase theta (468 aa).

Disordered regions lie at residues 1-53 (MNVM…DQST) and 91-112 (HANR…CGTE). A Protein kinase domain is found at 134-418 (YMAQRVVGTG…ALEACAHPFF (285 aa)). ATP contacts are provided by residues 140–148 (VGTGSFGVV) and Lys163. Asp259 acts as the Proton acceptor in catalysis. The residue at position 294 (Tyr294) is a Phosphotyrosine.

Belongs to the protein kinase superfamily. CMGC Ser/Thr protein kinase family. GSK-3 subfamily. In terms of processing, autophosphorylated mainly on threonine and serine residues. In developing pollen.

It carries out the reaction L-seryl-[protein] + ATP = O-phospho-L-seryl-[protein] + ADP + H(+). It catalyses the reaction L-threonyl-[protein] + ATP = O-phospho-L-threonyl-[protein] + ADP + H(+). Its function is as follows. May mediate extracellular signals to regulate transcription in differentiating cells. The polypeptide is Shaggy-related protein kinase theta (Brassica napus (Rape)).